The following is a 121-amino-acid chain: Small ribosomal subunit protein uS11 (121 aa).

This sequence belongs to the universal ribosomal protein uS11 family. As to quaternary structure, part of the 30S ribosomal subunit. Interacts with proteins S7 and S18. Binds to IF-3.

Functionally, located on the platform of the 30S subunit, it bridges several disparate RNA helices of the 16S rRNA. Forms part of the Shine-Dalgarno cleft in the 70S ribosome. The chain is Small ribosomal subunit protein uS11 from Mycoplasma genitalium (strain ATCC 33530 / DSM 19775 / NCTC 10195 / G37) (Mycoplasmoides genitalium).